Reading from the N-terminus, the 499-residue chain is Isoflavone 2'-hydroxylase (499 aa).

Cys436 is a binding site for heme.

It belongs to the cytochrome P450 family. Requires heme as cofactor.

It is found in the membrane. The enzyme catalyses a 2'-unsubstituted isoflavone + reduced [NADPH--hemoprotein reductase] + O2 = a 2'-hydroxyisoflavone + oxidized [NADPH--hemoprotein reductase] + H2O + H(+). Its function is as follows. Catalyzes the hydroxylation of isoflavones, daidzein and formononetin, to yield 2'-hydroxyisoflavones, 2'-hydroxydaidzein, and 2'-hydroxyformononetin, respectively. This chain is Isoflavone 2'-hydroxylase (CYP81E1), found in Glycyrrhiza echinata (Licorice).